The chain runs to 313 residues: D-alanine--D-alanine ligase (313 aa).

The 196-residue stretch at 114–309 folds into the ATP-grasp domain; it reads KWLWKGVGLP…FSKLVLKLIS (196 aa). 142 to 195 provides a ligand contact to ATP; that stretch reads DLTFPVIVKPSHEGSSIGMRKVDTLDALQEAVDFAQQYDSEILIEQWITGREFT. Mg(2+)-binding residues include aspartate 263, glutamate 276, and asparagine 278.

Belongs to the D-alanine--D-alanine ligase family. Mg(2+) serves as cofactor. The cofactor is Mn(2+).

It is found in the cytoplasm. The enzyme catalyses 2 D-alanine + ATP = D-alanyl-D-alanine + ADP + phosphate + H(+). Its pathway is cell wall biogenesis; peptidoglycan biosynthesis. Cell wall formation. The chain is D-alanine--D-alanine ligase from Hydrogenovibrio crunogenus (strain DSM 25203 / XCL-2) (Thiomicrospira crunogena).